A 965-amino-acid chain; its full sequence is Vacuolar membrane protease (965 aa).

At 1–16 (MARPSLSPSNPLGFTP) the chain is on the cytoplasmic side. Residues 17–37 (WPVTVITAVVYLALVVPLLVV) form a helical membrane-spanning segment. Residues 38–387 (HHVVPSAPSS…SAFVVFELHT (350 aa)) lie on the Vacuolar side of the membrane. N53 and N119 each carry an N-linked (GlcNAc...) asparagine glycan. Zn(2+)-binding residues include H171 and D183. E217 (proton acceptor) is an active-site residue. Zn(2+)-binding residues include E218, E243, and H316. Residues 388–408 (LFALSVTLLVVAPLVLLVTSI) traverse the membrane as a helical segment. Residues 409 to 441 (ALARADKMYLFRSSASPEDSDGSEVVPLHGVRG) lie on the Cytoplasmic side of the membrane. The chain crosses the membrane as a helical span at residues 442–462 (FFRFPFLLVIPTAVTVGLAYL). At 463-472 (VTKFNPYIIH) the chain is on the vacuolar side. A helical transmembrane segment spans residues 473-493 (SSEYAVWSMMISAWVFLAWFV). Residues 494–507 (SRVADFARPSAFHR) are Cytoplasmic-facing. The chain crosses the membrane as a helical span at residues 508–528 (VYTLTWLFLVEWVFLVISTVY). The Vacuolar segment spans residues 529–532 (ENQY). The helical transmembrane segment at 533-553 (GLAGGYFVLFVFAGTFLATWI) threads the bilayer. Over 554 to 661 (SYLELFALPR…WSIHLPKWVW (108 aa)) the chain is Cytoplasmic. The disordered stretch occupies residues 577–610 (RTSSHGSRLGTASGEDVEDGEDEDDDGTTAEATE). A compositionally biased stretch (acidic residues) spans 591-604 (EDVEDGEDEDDDGT). Residues 662–682 (VLQFLLTAPLVLIFVGPLALL) traverse the membrane as a helical segment. Residues 683-698 (LTSALRQTGQDGSPSL) lie on the Vacuolar side of the membrane. The helical transmembrane segment at 699 to 719 (FIYIAVAALTTLLFIPLLPFI) threads the bilayer. Topologically, residues 720 to 725 (HRYTHH) are cytoplasmic. Residues 726 to 746 (IPLFLLCVFAGTLIYNLVAFP) traverse the membrane as a helical segment. The Vacuolar portion of the chain corresponds to 747-965 (FSPANRLKLF…LVEGSRRFEV (219 aa)). N793 and N830 each carry an N-linked (GlcNAc...) asparagine glycan.

This sequence belongs to the peptidase M28 family. Zn(2+) is required as a cofactor.

The protein localises to the vacuole membrane. In terms of biological role, may be involved in vacuolar sorting and osmoregulation. This Aspergillus fumigatus (strain CBS 144.89 / FGSC A1163 / CEA10) (Neosartorya fumigata) protein is Vacuolar membrane protease.